The sequence spans 262 residues: Tryptophan synthase alpha chain (262 aa).

Residues Glu-49 and Asp-60 each act as proton acceptor in the active site.

Belongs to the TrpA family. In terms of assembly, tetramer of two alpha and two beta chains.

It catalyses the reaction (1S,2R)-1-C-(indol-3-yl)glycerol 3-phosphate + L-serine = D-glyceraldehyde 3-phosphate + L-tryptophan + H2O. Its pathway is amino-acid biosynthesis; L-tryptophan biosynthesis; L-tryptophan from chorismate: step 5/5. Its function is as follows. The alpha subunit is responsible for the aldol cleavage of indoleglycerol phosphate to indole and glyceraldehyde 3-phosphate. This Thermoanaerobacter sp. (strain X514) protein is Tryptophan synthase alpha chain.